We begin with the raw amino-acid sequence, 859 residues long: Linoleate 9S-lipoxygenase B (859 aa).

One can recognise a PLAT domain in the interval 34-158; it reads INIGASVVDG…RYKSDRIFFA (125 aa). The region spanning 161–859 is the Lipoxygenase domain; it reads AYLPSETPQP…GKGIPNSVSI (699 aa). The segment at 213–246 is disordered; sequence EYARPILGGSSEYPYPRRGRTGREPTKADPNCES. The span at 233–244 shows a compositional bias: basic and acidic residues; the sequence is TGREPTKADPNC. Fe cation contacts are provided by His-521, His-526, His-711, and Ile-859.

This sequence belongs to the lipoxygenase family. In terms of assembly, monomer. It depends on Fe cation as a cofactor. In terms of tissue distribution, fruit specific.

It is found in the cytoplasm. The catalysed reaction is (9Z,12Z)-octadecadienoate + O2 = (9S)-hydroperoxy-(10E,12Z)-octadecadienoate. Its pathway is lipid metabolism; oxylipin biosynthesis. Functionally, plant lipoxygenase may be involved in a number of diverse aspects of plant physiology including growth and development, pest resistance, and senescence or responses to wounding. It catalyzes the hydroperoxidation of lipids containing a cis,cis-1,4-pentadiene structure. The chain is Linoleate 9S-lipoxygenase B (LOX1.2) from Solanum lycopersicum (Tomato).